The following is a 1479-amino-acid chain: WASH complex subunit 2 (1479 aa).

Over residues 1-17 the composition is skewed to low complexity; it reads MPEEQPQQQQQPVREQP. Disordered stretches follow at residues 1–25, 188–210, 240–564, 576–1383, and 1419–1479; these read MPEEQPQQQQQPVREQPSNPDDVPW, GGLVEGGEQAGTDAQPSANTEKK, FIED…GGVK, FSGK…FDDI, and TSTT…NLFD. A compositionally biased stretch (acidic residues) spans 242–279; it reads EDSDSDSSDEEDEEDVDAEDGSDESSSESSSDDDDEKD. Positions 334–349 are enriched in low complexity; it reads SKKSSNSYTSSLSDIL. A compositionally biased stretch (acidic residues) spans 422–431; it reads DDDLFGDSEE. Composition is skewed to low complexity over residues 465 to 475 and 514 to 532; these read TTTSSQPQQKK and TPKPKSTTTSAAPTATTTK. Thr-535 is modified (phosphothreonine). The span at 542–552 shows a compositional bias: polar residues; that stretch reads ASGSESTTGKS. Basic and acidic residues predominate over residues 595–620; it reads TESKASEDDFFSSDKKSTSATKKDAE. Residues 709 to 723 are compositionally biased toward low complexity; the sequence is PKAPTTATTTTTTKP. Over residues 765–781 the composition is skewed to basic and acidic residues; the sequence is TETKKQPITEEPKKKQD. Residues 802–814 are compositionally biased toward polar residues; that stretch reads ASISPASPVSTIE. Positions 839–885 are enriched in basic and acidic residues; sequence DLTKDEPAKSEPTKVEPTKVEPTKAEPTKVEPAKVEPTKVESDKKES. Over residues 904 to 916 the composition is skewed to polar residues; sequence KNPTTSSSTTATE. The segment covering 951–968 has biased composition (low complexity); the sequence is SSTTKKSTTTTTTTTSSK. The segment covering 981–990 has biased composition (basic and acidic residues); that stretch reads KKVEEKKSSD. Low complexity-rich tracts occupy residues 991–1000 and 1010–1021; these read FDSFFSGSDD and KTTTTPPLTSTT. Residues 1062–1075 show a composition bias toward polar residues; the sequence is PLTSNNTKNRTKSI. Over residues 1091-1107 the composition is skewed to basic and acidic residues; sequence EKNRSESPTSEKAEPTK. Positions 1108 to 1123 are enriched in polar residues; sequence KTSNISSLQNKLSLNP. Over residues 1147–1162 the composition is skewed to low complexity; sequence STNNDNDSSATDLSDS. 2 stretches are compositionally biased toward polar residues: residues 1163–1174 and 1220–1236; these read GRSSPSVTSPTL and KSGTSAPNRSESPTPTQ. Ser-1249 carries the post-translational modification Phosphoserine. Residues 1277-1292 show a composition bias toward low complexity; sequence EKTSSGKSSPSPTIKS. Residues 1307–1317 are compositionally biased toward polar residues; the sequence is ASTTTKPTASE. Positions 1327–1358 are enriched in basic and acidic residues; it reads KKSEPETPKETPKETPKEKEQTKEKEQPKETP. Composition is skewed to low complexity over residues 1419–1445 and 1452–1466; these read TSTTSKSTTTTTTTTTTKAKSTKAVDN and NTTTKATPTKATPSK.

It belongs to the FAM21 family. As to quaternary structure, probable component of the WASH complex.

The polypeptide is WASH complex subunit 2 (Dictyostelium discoideum (Social amoeba)).